We begin with the raw amino-acid sequence, 116 residues long: Ribosome-binding factor A (116 aa).

The protein belongs to the RbfA family. As to quaternary structure, monomer. Binds 30S ribosomal subunits, but not 50S ribosomal subunits or 70S ribosomes.

It is found in the cytoplasm. One of several proteins that assist in the late maturation steps of the functional core of the 30S ribosomal subunit. Associates with free 30S ribosomal subunits (but not with 30S subunits that are part of 70S ribosomes or polysomes). Required for efficient processing of 16S rRNA. May interact with the 5'-terminal helix region of 16S rRNA. The sequence is that of Ribosome-binding factor A from Halalkalibacterium halodurans (strain ATCC BAA-125 / DSM 18197 / FERM 7344 / JCM 9153 / C-125) (Bacillus halodurans).